The following is a 198-amino-acid chain: dTTP/UTP pyrophosphatase (198 aa).

Asp-75 acts as the Proton acceptor in catalysis.

Belongs to the Maf family. YhdE subfamily. The cofactor is a divalent metal cation.

The protein localises to the cytoplasm. The enzyme catalyses dTTP + H2O = dTMP + diphosphate + H(+). It carries out the reaction UTP + H2O = UMP + diphosphate + H(+). Its function is as follows. Nucleoside triphosphate pyrophosphatase that hydrolyzes dTTP and UTP. May have a dual role in cell division arrest and in preventing the incorporation of modified nucleotides into cellular nucleic acids. This chain is dTTP/UTP pyrophosphatase, found in Wolbachia sp. subsp. Brugia malayi (strain TRS).